We begin with the raw amino-acid sequence, 447 residues long: UDP-N-acetylmuramate--L-alanine ligase (447 aa).

108–114 contributes to the ATP binding site; it reads GSHGKTS.

Belongs to the MurCDEF family.

It localises to the cytoplasm. It catalyses the reaction UDP-N-acetyl-alpha-D-muramate + L-alanine + ATP = UDP-N-acetyl-alpha-D-muramoyl-L-alanine + ADP + phosphate + H(+). It functions in the pathway cell wall biogenesis; peptidoglycan biosynthesis. Its function is as follows. Cell wall formation. In Listeria monocytogenes serovar 1/2a (strain ATCC BAA-679 / EGD-e), this protein is UDP-N-acetylmuramate--L-alanine ligase.